The following is a 211-amino-acid chain: ATP phosphoribosyltransferase (211 aa).

This sequence belongs to the ATP phosphoribosyltransferase family. Short subfamily. As to quaternary structure, heteromultimer composed of HisG and HisZ subunits.

It is found in the cytoplasm. It carries out the reaction 1-(5-phospho-beta-D-ribosyl)-ATP + diphosphate = 5-phospho-alpha-D-ribose 1-diphosphate + ATP. It functions in the pathway amino-acid biosynthesis; L-histidine biosynthesis; L-histidine from 5-phospho-alpha-D-ribose 1-diphosphate: step 1/9. Functionally, catalyzes the condensation of ATP and 5-phosphoribose 1-diphosphate to form N'-(5'-phosphoribosyl)-ATP (PR-ATP). Has a crucial role in the pathway because the rate of histidine biosynthesis seems to be controlled primarily by regulation of HisG enzymatic activity. In Pseudomonas putida (strain W619), this protein is ATP phosphoribosyltransferase.